The following is a 214-amino-acid chain: NADH-quinone oxidoreductase subunit C (214 aa).

It belongs to the complex I 30 kDa subunit family. NDH-1 is composed of 14 different subunits. Subunits NuoB, C, D, E, F, and G constitute the peripheral sector of the complex.

It localises to the cell inner membrane. It carries out the reaction a quinone + NADH + 5 H(+)(in) = a quinol + NAD(+) + 4 H(+)(out). NDH-1 shuttles electrons from NADH, via FMN and iron-sulfur (Fe-S) centers, to quinones in the respiratory chain. The immediate electron acceptor for the enzyme in this species is believed to be ubiquinone. Couples the redox reaction to proton translocation (for every two electrons transferred, four hydrogen ions are translocated across the cytoplasmic membrane), and thus conserves the redox energy in a proton gradient. The polypeptide is NADH-quinone oxidoreductase subunit C (Francisella tularensis subsp. tularensis (strain WY96-3418)).